Reading from the N-terminus, the 88-residue chain is Phosphocarrier protein HPr (88 aa).

The HPr domain maps to 1–88 (MEQQSYTIID…DVLSKEGLTE (88 aa)). H15 acts as the Pros-phosphohistidine intermediate in catalysis. At S46 the chain carries Phosphoserine; by HPrK/P.

This sequence belongs to the HPr family.

The protein resides in the cytoplasm. With respect to regulation, phosphorylation on Ser-46 inhibits the phosphoryl transfer from enzyme I to HPr. Its function is as follows. General (non sugar-specific) component of the phosphoenolpyruvate-dependent sugar phosphotransferase system (sugar PTS). This major carbohydrate active-transport system catalyzes the phosphorylation of incoming sugar substrates concomitantly with their translocation across the cell membrane. The phosphoryl group from phosphoenolpyruvate (PEP) is transferred to the phosphoryl carrier protein HPr by enzyme I. Phospho-HPr then transfers it to the PTS EIIA domain. Functionally, P-Ser-HPr interacts with the catabolite control protein A (CcpA), forming a complex that binds to DNA at the catabolite response elements cre, operator sites preceding a large number of catabolite-regulated genes. Thus, P-Ser-HPr is a corepressor in carbon catabolite repression (CCR), a mechanism that allows bacteria to coordinate and optimize the utilization of available carbon sources. P-Ser-HPr also plays a role in inducer exclusion, in which it probably interacts with several non-PTS permeases and inhibits their transport activity. This chain is Phosphocarrier protein HPr (ptsH), found in Staphylococcus carnosus.